Consider the following 541-residue polypeptide: Chaperonin GroEL (541 aa).

ATP contacts are provided by residues Thr-29–Pro-32, Lys-50, Asp-86–Thr-90, Gly-416, and Asp-498.

It belongs to the chaperonin (HSP60) family. As to quaternary structure, forms a cylinder of 14 subunits composed of two heptameric rings stacked back-to-back. Interacts with the co-chaperonin GroES.

Its subcellular location is the cytoplasm. It catalyses the reaction ATP + H2O + a folded polypeptide = ADP + phosphate + an unfolded polypeptide.. In terms of biological role, together with its co-chaperonin GroES, plays an essential role in assisting protein folding. The GroEL-GroES system forms a nano-cage that allows encapsulation of the non-native substrate proteins and provides a physical environment optimized to promote and accelerate protein folding. The polypeptide is Chaperonin GroEL (Anaplasma phagocytophilum (Ehrlichia phagocytophila)).